The following is a 223-amino-acid chain: Type II restriction enzyme BglII (223 aa).

2 residues coordinate Mg(2+): Asp-84 and Val-94.

In terms of assembly, homodimer. Requires Mg(2+) as cofactor.

The catalysed reaction is Endonucleolytic cleavage of DNA to give specific double-stranded fragments with terminal 5'-phosphates.. Functionally, a P subtype restriction enzyme that recognizes the double-stranded sequence 5'-AGATCT-3' and cleaves after A-1. The sequence is that of Type II restriction enzyme BglII (bglIIR) from Bacillus subtilis.